A 255-amino-acid polypeptide reads, in one-letter code: Coenzyme F420:L-glutamate ligase (255 aa).

Residues 11–14 (IPLI), 40–41 (ST), and lysine 45 contribute to the GTP site. Residue aspartate 109 coordinates a divalent metal cation. Asparagine 112 lines the GTP pocket. A divalent metal cation is bound by residues aspartate 150, threonine 151, and glutamate 208. A GTP-binding site is contributed by 206–213 (MGEGAGGT).

This sequence belongs to the CofE family. As to quaternary structure, homodimer. Mg(2+) is required as a cofactor. Requires Mn(2+) as cofactor. It depends on K(+) as a cofactor.

It catalyses the reaction oxidized coenzyme F420-0 + GTP + L-glutamate = oxidized coenzyme F420-1 + GDP + phosphate + H(+). The catalysed reaction is oxidized coenzyme F420-1 + GTP + L-glutamate = oxidized coenzyme F420-2 + GDP + phosphate + H(+). The protein operates within cofactor biosynthesis; coenzyme F420 biosynthesis. Catalyzes the GTP-dependent successive addition of two or more gamma-linked L-glutamates to the L-lactyl phosphodiester of 7,8-didemethyl-8-hydroxy-5-deazariboflavin (F420-0) to form coenzyme F420-0-glutamyl-glutamate (F420-2) or polyglutamated F420 derivatives. The protein is Coenzyme F420:L-glutamate ligase of Methanosarcina barkeri (strain Fusaro / DSM 804).